Consider the following 356-residue polypeptide: UDP-N-acetylglucosamine--N-acetylmuramyl-(pentapeptide) pyrophosphoryl-undecaprenol N-acetylglucosamine transferase (356 aa).

UDP-N-acetyl-alpha-D-glucosamine is bound by residues arginine 166, serine 196, and glutamine 290.

The protein belongs to the glycosyltransferase 28 family. MurG subfamily.

It is found in the cell membrane. The catalysed reaction is Mur2Ac(oyl-L-Ala-gamma-D-Glu-L-Lys-D-Ala-D-Ala)-di-trans,octa-cis-undecaprenyl diphosphate + UDP-N-acetyl-alpha-D-glucosamine = beta-D-GlcNAc-(1-&gt;4)-Mur2Ac(oyl-L-Ala-gamma-D-Glu-L-Lys-D-Ala-D-Ala)-di-trans,octa-cis-undecaprenyl diphosphate + UDP + H(+). The protein operates within cell wall biogenesis; peptidoglycan biosynthesis. Functionally, cell wall formation. Catalyzes the transfer of a GlcNAc subunit on undecaprenyl-pyrophosphoryl-MurNAc-pentapeptide (lipid intermediate I) to form undecaprenyl-pyrophosphoryl-MurNAc-(pentapeptide)GlcNAc (lipid intermediate II). The sequence is that of UDP-N-acetylglucosamine--N-acetylmuramyl-(pentapeptide) pyrophosphoryl-undecaprenol N-acetylglucosamine transferase from Staphylococcus aureus (strain MW2).